We begin with the raw amino-acid sequence, 208 residues long: Uracil phosphoribosyltransferase (208 aa).

Residues R78, R103, and 130 to 138 (DPMLATANS) each bind 5-phospho-alpha-D-ribose 1-diphosphate. Uracil is bound by residues I193 and 198-200 (GDA). D199 serves as a coordination point for 5-phospho-alpha-D-ribose 1-diphosphate.

The protein belongs to the UPRTase family. Mg(2+) is required as a cofactor.

It catalyses the reaction UMP + diphosphate = 5-phospho-alpha-D-ribose 1-diphosphate + uracil. The protein operates within pyrimidine metabolism; UMP biosynthesis via salvage pathway; UMP from uracil: step 1/1. With respect to regulation, allosterically activated by GTP. In terms of biological role, catalyzes the conversion of uracil and 5-phospho-alpha-D-ribose 1-diphosphate (PRPP) to UMP and diphosphate. This is Uracil phosphoribosyltransferase from Brucella melitensis biotype 2 (strain ATCC 23457).